The chain runs to 667 residues: Probable oxidoreductase YyaE (667 aa).

A 4Fe-4S Mo/W bis-MGD-type domain is found at 2–59 (SKVHQSACPLNCWDSCGFLVTVDDGKVTKVDGDPNHPITEGKICGRGRMLETKTNSPD). 4 residues coordinate [4Fe-4S] cluster: cysteine 9, cysteine 13, cysteine 17, and cysteine 45.

It belongs to the prokaryotic molybdopterin-containing oxidoreductase family. It depends on Mo-bis(molybdopterin guanine dinucleotide) as a cofactor.

This chain is Probable oxidoreductase YyaE (yyaE), found in Bacillus subtilis (strain 168).